The sequence spans 156 residues: Ribosomal RNA large subunit methyltransferase H (156 aa).

S-adenosyl-L-methionine-binding positions include L73, G104, and 123-128; that span reads LSSLTL.

The protein belongs to the RNA methyltransferase RlmH family. In terms of assembly, homodimer.

It localises to the cytoplasm. It carries out the reaction pseudouridine(1915) in 23S rRNA + S-adenosyl-L-methionine = N(3)-methylpseudouridine(1915) in 23S rRNA + S-adenosyl-L-homocysteine + H(+). Specifically methylates the pseudouridine at position 1915 (m3Psi1915) in 23S rRNA. The polypeptide is Ribosomal RNA large subunit methyltransferase H (Neisseria meningitidis serogroup C / serotype 2a (strain ATCC 700532 / DSM 15464 / FAM18)).